A 204-amino-acid chain; its full sequence is GTP cyclohydrolase 1 (204 aa).

Positions 92, 95, and 165 each coordinate Zn(2+).

This sequence belongs to the GTP cyclohydrolase I family. In terms of assembly, homomer.

It carries out the reaction GTP + H2O = 7,8-dihydroneopterin 3'-triphosphate + formate + H(+). Its pathway is cofactor biosynthesis; 7,8-dihydroneopterin triphosphate biosynthesis; 7,8-dihydroneopterin triphosphate from GTP: step 1/1. The chain is GTP cyclohydrolase 1 from Mycolicibacterium paratuberculosis (strain ATCC BAA-968 / K-10) (Mycobacterium paratuberculosis).